The primary structure comprises 259 residues: Isoepoxydon dehydrogenase patN (259 aa).

Positions 96 and 125 each coordinate NADP(+). Residues Ser-143 and Ser-144 each act as proton donor in the active site. The NADP(+) site is built by Tyr-158, Lys-162, and Ile-191. Tyr-158 serves as the catalytic Proton acceptor. Lys-162 functions as the Lowers pKa of active site Tyr in the catalytic mechanism.

Belongs to the short-chain dehydrogenases/reductases (SDR) family.

It is found in the cytoplasm. Its subcellular location is the cytosol. The catalysed reaction is isoepoxydon + NADP(+) = phyllostine + NADPH + H(+). Its pathway is mycotoxin biosynthesis; patulin biosynthesis. Isoepoxydon dehydrogenase; part of the gene cluster that mediates the biosynthesis of patulin, an acetate-derived tetraketide mycotoxin produced by several fungal species that shows antimicrobial properties against several bacteria. PatN catalyzes the conversion of isoepoxydon into phyllostine. The pathway begins with the synthesis of 6-methylsalicylic acid by the polyketide synthase (PKS) patK via condensation of acetate and malonate units. The 6-methylsalicylic acid decarboxylase patG then catalyzes the decarboxylation of 6-methylsalicylic acid to yield m-cresol (also known as 3-methylphenol). These first reactions occur in the cytosol. The intermediate m-cresol is then transported into the endoplasmic reticulum where the cytochrome P450 monooxygenase patH converts it to m-hydroxybenzyl alcohol, which is further converted to gentisyl alcohol by the cytochrome P450 monooxygenase patI. The oxidoreductases patJ and patO further convert gentisyl alcohol to isoepoxydon in the vacuole. PatN catalyzes then the transformation of isoepoxydon into phyllostine. The cluster protein patF is responsible for the conversion from phyllostine to neopatulin whereas the alcohol dehydrogenase patD converts neopatulin to E-ascladiol. The steps between isoepoxydon and E-ascladiol occur in the cytosol, and E-ascladiol is probably secreted to the extracellular space by one of the cluster-specific transporters patC or patM. Finally, the secreted patulin synthase patE catalyzes the conversion of E-ascladiol to patulin. This chain is Isoepoxydon dehydrogenase patN, found in Aspergillus clavatus (strain ATCC 1007 / CBS 513.65 / DSM 816 / NCTC 3887 / NRRL 1 / QM 1276 / 107).